A 221-amino-acid polypeptide reads, in one-letter code: Probable transaldolase (221 aa).

Catalysis depends on lysine 87, which acts as the Schiff-base intermediate with substrate.

Belongs to the transaldolase family. Type 3B subfamily.

The protein resides in the cytoplasm. It catalyses the reaction D-sedoheptulose 7-phosphate + D-glyceraldehyde 3-phosphate = D-erythrose 4-phosphate + beta-D-fructose 6-phosphate. It functions in the pathway carbohydrate degradation; pentose phosphate pathway; D-glyceraldehyde 3-phosphate and beta-D-fructose 6-phosphate from D-ribose 5-phosphate and D-xylulose 5-phosphate (non-oxidative stage): step 2/3. Functionally, transaldolase is important for the balance of metabolites in the pentose-phosphate pathway. The sequence is that of Probable transaldolase from Syntrophobacter fumaroxidans (strain DSM 10017 / MPOB).